Consider the following 489-residue polypeptide: Cytochrome P450 monooxygenase bfoB (489 aa).

An N-terminal signal peptide occupies residues M1–R18. 3 N-linked (GlcNAc...) asparagine glycosylation sites follow: N113, N348, and N386. Heme is bound at residue C429.

This sequence belongs to the cytochrome P450 family. Requires heme as cofactor.

It catalyses the reaction 2 fonsecin B + NADPH + O2 + H(+) = bifonsecin B + NADP(+) + 2 H2O. It carries out the reaction 2 rubrofusarin B + NADPH + O2 + 3 H(+) = nigerone + NADP(+) + 2 H2O. The protein operates within secondary metabolite biosynthesis. Its function is as follows. Cytochrome P450 monooxygenase; part of the gene cluster that mediates the biosynthesis of bifonsecin B, a dimeric gamma-naphthopyrone. The first step in the biosynthesis of bifonsecin B is the production of gamma-naphthopyrone precursor YWA1 by the non-reducing polyketide synthase albA, via condensation of one acetyl-CoA starter unit with 6 malonyl-CoA units. YWA1 is then methylated by bfoE at position C-6 to yield foncesin which is further methylated at position C-8 by bfoD to produce fonsecin B. A key enzyme in the biosynthetic pathway is the cytochrome P450 monooxygenase bfoB which catalyzes the oxidative dimerization of fonsecin B to bifonsecin B. Bfob also catalyzes the oxidative dimerization of rubrofusarin B into nigerone. The stereoselectivity of bfoB is influenced by the two natural monomeric substrates; homodimerization of fonsecin B yields a stereochemically pure biaryl, M-foncerine B, while rubrofusarin B yields a mixture of enantiomers M- and P-nigerone. The protein is Cytochrome P450 monooxygenase bfoB of Aspergillus brasiliensis (strain CBS 101740 / IMI 381727 / IBT 21946).